A 291-amino-acid polypeptide reads, in one-letter code: 4-hydroxy-tetrahydrodipicolinate synthase (291 aa).

Position 45 (Thr45) interacts with pyruvate. Tyr131 functions as the Proton donor/acceptor in the catalytic mechanism. Catalysis depends on Lys159, which acts as the Schiff-base intermediate with substrate. Ile202 serves as a coordination point for pyruvate.

It belongs to the DapA family. In terms of assembly, homotetramer; dimer of dimers.

The protein resides in the cytoplasm. It carries out the reaction L-aspartate 4-semialdehyde + pyruvate = (2S,4S)-4-hydroxy-2,3,4,5-tetrahydrodipicolinate + H2O + H(+). It participates in amino-acid biosynthesis; L-lysine biosynthesis via DAP pathway; (S)-tetrahydrodipicolinate from L-aspartate: step 3/4. Its function is as follows. Catalyzes the condensation of (S)-aspartate-beta-semialdehyde [(S)-ASA] and pyruvate to 4-hydroxy-tetrahydrodipicolinate (HTPA). The sequence is that of 4-hydroxy-tetrahydrodipicolinate synthase from Methanosarcina mazei (strain ATCC BAA-159 / DSM 3647 / Goe1 / Go1 / JCM 11833 / OCM 88) (Methanosarcina frisia).